We begin with the raw amino-acid sequence, 512 residues long: Cytochrome P450 monooxygenase poxM (512 aa).

The helical transmembrane segment at 15–35 threads the bilayer; it reads LLKGATIALSFFSLYLFGLVI. C449 serves as a coordination point for heme.

This sequence belongs to the cytochrome P450 family. Requires heme as cofactor.

It localises to the membrane. It functions in the pathway secondary metabolite biosynthesis. In terms of biological role, cytochrome P450 monooxygenase; part of the gene cluster that mediates the biosynthesis of oxaleimides, cytotoxic compounds containing an unusual disubstituted succinimide moiety. The first step of the pathway is provided by the HR-PKS poxF that serves in a new mode of collaborative biosynthesis with the PKS-NRPS poxE, by providing the olefin containing amino acid substrate via the synthesis of an ACP-bound dec-4-enoate. The cytochrome P450 monooxygenase poxM-catalyzed oxidation at the alpha-position creates the enzyme-bound 2-hydroxydec-4-enoyl-ACP thioester, which may be prone to spontaneous hydrolysis to yield 2-hydroxydec-4-enoic acid due to increased electrophilicity of the carbonyl. 2-hydroxydec-4-enoic acid can then be further oxidized by poxM to yield the alpha-ketoacid 2-oxodec-4-enoicacid, which is reductively aminated by the aminotransferase poxL to yield (S,E)-2-aminodec-4-enoic acid. The Hybrid PKS-NRPS synthetase poxE then performs condensation between the octaketide product of its PKS modules and the amino group of (S,E)-2-aminodec-4-enoic acid which is activated and incorporated by the adenylation domain. The resulting aminoacyl product can be cyclized by the Diels-Alderase PoxQ and reductively released by the reductive (R) domain of poxE to yield an aldehyde intermediate. The released aldehyde is then substrate for a Knoevenagel condensation by the hydrolyase poxO followed by an oxidation at the 5-position of the pyrrolidone ring. The presence of the olefin from the amino acid building block allows for migration of the substituted allyl group to occur. This allylic transposition reaction takes place in a conjugate addition, semipinacol-like fashion to yield a succinimide intermediate. Iterative two-electron oxidations of the C7 methyl of the succinimide intermediate to the carboxylic acid can be catalyzed by one of two remaining cytochrome P450 monooxygenasess poxC or poxD to yield oxaleimide A. Subsequent oxidation yields the maleimide scaffold oxaleimide I. Both oxaleimide A and oxaleimide I can undergo oxidative modifications in the decalin ring to yield the series of products oxaleimides B to H. This is Cytochrome P450 monooxygenase poxM from Penicillium oxalicum (strain 114-2 / CGMCC 5302) (Penicillium decumbens).